The following is a 419-amino-acid chain: 3-isopropylmalate dehydratase large subunit (419 aa).

Residues C300, C360, and C363 each coordinate [4Fe-4S] cluster.

This sequence belongs to the aconitase/IPM isomerase family. LeuC type 2 subfamily. Heterodimer of LeuC and LeuD. [4Fe-4S] cluster is required as a cofactor.

The enzyme catalyses (2R,3S)-3-isopropylmalate = (2S)-2-isopropylmalate. Its pathway is amino-acid biosynthesis; L-leucine biosynthesis; L-leucine from 3-methyl-2-oxobutanoate: step 2/4. In terms of biological role, catalyzes the isomerization between 2-isopropylmalate and 3-isopropylmalate, via the formation of 2-isopropylmaleate. This chain is 3-isopropylmalate dehydratase large subunit, found in Acetivibrio thermocellus (strain ATCC 27405 / DSM 1237 / JCM 9322 / NBRC 103400 / NCIMB 10682 / NRRL B-4536 / VPI 7372) (Clostridium thermocellum).